The sequence spans 148 residues: Lysozyme C (148 aa).

The signal sequence occupies residues Met1–Gly18. Residues Lys19 to Val148 enclose the C-type lysozyme domain. 4 disulfide bridges follow: Cys24-Cys146, Cys48-Cys134, Cys83-Cys99, and Cys95-Cys113. Catalysis depends on residues Glu53 and Asp71.

The protein belongs to the glycosyl hydrolase 22 family. In terms of assembly, monomer.

The protein resides in the secreted. The enzyme catalyses Hydrolysis of (1-&gt;4)-beta-linkages between N-acetylmuramic acid and N-acetyl-D-glucosamine residues in a peptidoglycan and between N-acetyl-D-glucosamine residues in chitodextrins.. Lysozymes have primarily a bacteriolytic function; those in tissues and body fluids are associated with the monocyte-macrophage system and enhance the activity of immunoagents. The chain is Lysozyme C (LYZ) from Miopithecus talapoin (Angolan talapoin).